The following is a 506-amino-acid chain: Acetaldehyde dehydrogenase 2 (506 aa).

240–245 (GETTTG) is an NAD(+) binding site. Active-site residues include Glu262 and Cys301.

It belongs to the aldehyde dehydrogenase family.

It catalyses the reaction an aldehyde + NAD(+) + H2O = a carboxylate + NADH + 2 H(+). It participates in alcohol metabolism; ethanol degradation; acetate from ethanol: step 2/2. The protein operates within ketone degradation; acetoin degradation. Functionally, involved in the catabolism of acetoin and ethanol. The sequence is that of Acetaldehyde dehydrogenase 2 (acoD) from Cupriavidus necator (strain ATCC 17699 / DSM 428 / KCTC 22496 / NCIMB 10442 / H16 / Stanier 337) (Ralstonia eutropha).